The following is a 229-amino-acid chain: Large ribosomal subunit protein uL1 (229 aa).

It belongs to the universal ribosomal protein uL1 family. As to quaternary structure, part of the 50S ribosomal subunit.

In terms of biological role, binds directly to 23S rRNA. The L1 stalk is quite mobile in the ribosome, and is involved in E site tRNA release. Protein L1 is also a translational repressor protein, it controls the translation of the L11 operon by binding to its mRNA. The chain is Large ribosomal subunit protein uL1 from Streptococcus pneumoniae (strain ATCC 700669 / Spain 23F-1).